The sequence spans 93 residues: Alpha-defensin 3 (93 aa).

The N-terminal stretch at 1–16 (MKTLVLLSALVLLAFQ) is a signal peptide. A propeptide spanning residues 17–58 (VQADPIQNTDEETKTEEQPGEDDQAVSVSFGDPEGSSLQEES) is cleaved from the precursor. The disordered stretch occupies residues 22 to 56 (IQNTDEETKTEEQPGEDDQAVSVSFGDPEGSSLQE). Disulfide bonds link Cys64-Cys92, Cys66-Cys81, and Cys71-Cys91.

Belongs to the alpha-defensin family. In terms of tissue distribution, paneth cells of the small bowel.

The protein localises to the secreted. In terms of biological role, probably contributes to the antimicrobial barrier function of the small bowel mucosa. The polypeptide is Alpha-defensin 3 (Defa3) (Mus musculus (Mouse)).